A 308-amino-acid chain; its full sequence is ADP-L-glycero-D-manno-heptose-6-epimerase (308 aa).

Residues 10 to 11, 31 to 32, Lys38, Lys53, 75 to 79, and Asn92 each bind NADP(+); these read MI, DN, and EGACS. Residue Tyr140 is the Proton acceptor of the active site. Lys144 serves as a coordination point for NADP(+). Position 169 (Asn169) interacts with substrate. NADP(+) is bound by residues Val170 and Lys178. Lys178 functions as the Proton acceptor in the catalytic mechanism. Residues Ser180, His187, 201 to 204, Arg209, and Tyr272 contribute to the substrate site; that span reads FEGS.

Belongs to the NAD(P)-dependent epimerase/dehydratase family. HldD subfamily. As to quaternary structure, homopentamer. The cofactor is NADP(+).

It carries out the reaction ADP-D-glycero-beta-D-manno-heptose = ADP-L-glycero-beta-D-manno-heptose. It functions in the pathway nucleotide-sugar biosynthesis; ADP-L-glycero-beta-D-manno-heptose biosynthesis; ADP-L-glycero-beta-D-manno-heptose from D-glycero-beta-D-manno-heptose 7-phosphate: step 4/4. Functionally, catalyzes the interconversion between ADP-D-glycero-beta-D-manno-heptose and ADP-L-glycero-beta-D-manno-heptose via an epimerization at carbon 6 of the heptose. The chain is ADP-L-glycero-D-manno-heptose-6-epimerase from Actinobacillus pleuropneumoniae serotype 7 (strain AP76).